The sequence spans 332 residues: Caffeoylshikimate esterase (332 aa).

Over residues 1–13 (MPSEAESSANSAP) the composition is skewed to low complexity. The tract at residues 1-26 (MPSEAESSANSAPATPPPPPNFWGTM) is disordered. The Nucleophile role is filled by serine 147. Active-site charge relay system residues include aspartate 268 and histidine 298.

The protein belongs to the AB hydrolase superfamily. Monoacylglycerol lipase family. Interacts with ACBP2. As to expression, expressed in vasculature of roots and leaves, stems, flowers and siliques.

It is found in the cell membrane. The catalysed reaction is 5-O-[(E)-caffeoyl]-shikimate + H2O = shikimate + (E)-caffeate + H(+). Functionally, esterase involved in the biosynthesis of lignin. Hydrolyzes caffeoylshikimate into caffeate and shikimate. Together with 4-coumarate--CoA ligase (4CL), acts on an alternative reaction for the formation of caffeoyl-CoA and bypasses the second reaction of shikimate O-hydroxycinnamoyltransferase (HST). Also accepts 4-coumaroylshikimate as substrate, but with lower activity. According to PubMed:20345607 and PubMed:22915575, possesses monoacylglycerol O-acyltransferase, monoacylglycerol lipase and lysophospholipase activities in vitro. With the association of ACBP2, may promote the degradation of lysophosphatidylcholine and detoxify the peroxidized membrane in response to cadmium-induced oxidative stress. However these results require additional confirmation in vivo. This chain is Caffeoylshikimate esterase (CSE), found in Arabidopsis thaliana (Mouse-ear cress).